The following is a 404-amino-acid chain: Argininosuccinate synthase (404 aa).

Residue 7–15 participates in ATP binding; the sequence is AYSGGLDTS. L-citrulline-binding residues include Tyr85 and Ser90. Position 115 (Gly115) interacts with ATP. L-aspartate is bound by residues Thr117, Asn121, and Asp122. Asn121 lines the L-citrulline pocket. L-citrulline-binding residues include Arg125, Ser178, Ser187, Glu264, and Tyr276.

It belongs to the argininosuccinate synthase family. Type 1 subfamily. Homotetramer.

Its subcellular location is the cytoplasm. It catalyses the reaction L-citrulline + L-aspartate + ATP = 2-(N(omega)-L-arginino)succinate + AMP + diphosphate + H(+). Its pathway is amino-acid biosynthesis; L-arginine biosynthesis; L-arginine from L-ornithine and carbamoyl phosphate: step 2/3. The polypeptide is Argininosuccinate synthase (Rhodopirellula baltica (strain DSM 10527 / NCIMB 13988 / SH1)).